The following is a 20-amino-acid chain: Neurotoxin BmK 18(2) (20 aa).

The region spanning 2 to 20 is the LCN-type CS-alpha/beta domain; sequence RDAYIAEDYDCVYHCARDA.

It belongs to the long (4 C-C) scorpion toxin superfamily. Sodium channel inhibitor family. Alpha subfamily. As to expression, expressed by the venom gland.

It is found in the secreted. In terms of biological role, binds to sodium channels (Nav) and inhibits the inactivation of the activated channels, thereby blocking neuronal transmission. This Olivierus martensii (Manchurian scorpion) protein is Neurotoxin BmK 18(2).